A 352-amino-acid chain; its full sequence is ER-derived vesicles protein ERV41 (352 aa).

Residues 1–23 are Cytoplasmic-facing; that stretch reads MAGLKTFDAFPKTEEQYKKKSTK. A helical transmembrane segment spans residues 24–44; sequence GGLTSLLTYLFLLFIAWTEFG. Over 45–311 the chain is Lumenal; the sequence is EYFGGYIDQQ…FLVRLVAICS (267 aa). A helical transmembrane segment spans residues 312 to 332; sequence FLVYCASWIFTLLDMALITIM. Over 333–352 the chain is Cytoplasmic; that stretch reads GPKWSLRYQPDDKTKGILDR. Residues 349–350 carry the Isoleucine-leucine motif motif; that stretch reads IL.

The protein belongs to the ERGIC family. In terms of assembly, interacts with ERV46.

It localises to the endoplasmic reticulum membrane. The protein resides in the golgi apparatus membrane. It is found in the cytoplasmic vesicle. The protein localises to the COPII-coated vesicle membrane. Its function is as follows. Constituent of COPII-coated endoplasmic reticulum-derived transport vesicles. Required for efficient transport of a subset of secretory proteins to the Golgi. The C-terminal Ile-Leu motif is required for exit from the endoplasmic reticulum. Facilitates retrograde transport from the Golgi to the endoplasmic reticulum. This is ER-derived vesicles protein ERV41 (ERV41) from Saccharomyces cerevisiae (strain ATCC 204508 / S288c) (Baker's yeast).